The primary structure comprises 912 residues: uncharacterized protein (912 aa).

Basic and acidic residues-rich tracts occupy residues 20–32 and 39–67; these read IERL…AEPA and HEYE…EDKT. A disordered region spans residues 20–91; that stretch reads IERLREQGRA…KPTLPQPETD (72 aa). Residues 68–77 show a composition bias toward basic residues; the sequence is RHKKLKHRSR.

This is an uncharacterized protein from Penicillium chrysogenum virus (isolate Caston/2003) (PcV).